We begin with the raw amino-acid sequence, 186 residues long: ATP synthase subunit b, chloroplastic (186 aa).

A helical membrane pass occupies residues 26 to 44 (ILETNLINLGVVIGTLLYF).

The protein belongs to the ATPase B chain family. As to quaternary structure, F-type ATPases have 2 components, F(1) - the catalytic core - and F(0) - the membrane proton channel. F(1) has five subunits: alpha(3), beta(3), gamma(1), delta(1), epsilon(1). F(0) has four main subunits: a(1), b(1), b'(1) and c(10-14). The alpha and beta chains form an alternating ring which encloses part of the gamma chain. F(1) is attached to F(0) by a central stalk formed by the gamma and epsilon chains, while a peripheral stalk is formed by the delta, b and b' chains.

The protein localises to the plastid. The protein resides in the chloroplast thylakoid membrane. Functionally, f(1)F(0) ATP synthase produces ATP from ADP in the presence of a proton or sodium gradient. F-type ATPases consist of two structural domains, F(1) containing the extramembraneous catalytic core and F(0) containing the membrane proton channel, linked together by a central stalk and a peripheral stalk. During catalysis, ATP synthesis in the catalytic domain of F(1) is coupled via a rotary mechanism of the central stalk subunits to proton translocation. Component of the F(0) channel, it forms part of the peripheral stalk, linking F(1) to F(0). The polypeptide is ATP synthase subunit b, chloroplastic (Chara vulgaris (Common stonewort)).